A 447-amino-acid chain; its full sequence is MADDEGEEDPGINNMGNLLQVISSESEEEDEMELEDAKTADSESPNIINFDTSLPTSHAYLGVDMEEFHGRTLHDDDSCQQIPVLPHVQVMLIPGQTLPLHLSRPQEVSMVRGLIQRDRTFAVLAYSDGLQREAHFGTTAEIYAYREEHEFGIETVKVKAIGRQRFQVLETRTQADGIQVARVQILPERVLPCPMTSLQLDSQSRHLLFPTNKPVSGRSPQSKCQWLHKYRRRKFLGASLTSWPSWLYALYDADSLMERVKLQLHEWDENLRDDSLPANPIDFSYRVAACLPIDDALRIQLLQIGNAIQRLRCELDIMSKCTSLCCKHCPDTEITTKNEIFSLSLCGPMAAYVNPHGYVHETLTVYKAFNLSLVGRPSTENSWFPGFAWTIAQCRVCGSHMGWKFTAVRKDLSPQKFWGLTRSALQPRIPEPDEGEMGHDHSPILCL.

Composition is skewed to acidic residues over residues 1–10 (MADDEGEEDP) and 25–34 (ESEEEDEMEL). The tract at residues 1–47 (MADDEGEEDPGINNMGNLLQVISSESEEEDEMELEDAKTADSESPNI) is disordered. The region spanning 82-322 (IPVLPHVQVM…CELDIMSKCT (241 aa)) is the Lon N-terminal domain. Residues 321–429 (CTSLCCKHCP…LTRSALQPRI (109 aa)) enclose the CULT domain. Residues C326 and C329 each coordinate Zn(2+). The (S)-thalidomide site is built by W383 and W389. The Zn(2+) site is built by C394 and C397.

This sequence belongs to the CRBN family. In terms of assembly, component of a DCX (DDB1-CUL4-X-box) protein ligase complex.

It localises to the cytoplasm. Its subcellular location is the nucleus. It functions in the pathway protein modification; protein ubiquitination. Functionally, substrate recognition component of a DCX (DDB1-CUL4-X-box) E3 protein ligase complex that mediates the ubiquitination and subsequent proteasomal degradation of target proteins, such as MEIS2. Normal degradation of key regulatory proteins is required for normal limb outgrowth and expression of the fibroblast growth factor FGF8. Maintains presynaptic glutamate release and consequently cognitive functions, such as memory and learning, by negatively regulating large-conductance calcium-activated potassium (BK) channels in excitatory neurons. Likely to function by regulating the assembly and neuronal surface expression of BK channels via its interaction with KCNT1. May also be involved in regulating anxiety-like behaviors via a BK channel-independent mechanism. This is Protein cereblon (crbn) from Xenopus tropicalis (Western clawed frog).